The chain runs to 872 residues: Rho guanine nucleotide exchange factor scd1 (872 aa).

The disordered stretch occupies residues 1–29 (MAYFQDRKTSSRSLPSYINHSTQNLVGPR). Over residues 11–25 (SRSLPSYINHSTQNL) the composition is skewed to polar residues. In terms of domain architecture, Calponin-homology (CH) spans 82-198 (DSIHREALNS…TIELLLKKYE (117 aa)). Positions 228–402 (SGRRVTAELY…VRVANQVNET (175 aa)) constitute a DH domain. The region spanning 426–547 (SLQYFGQLLV…WMSVLNRLLW (122 aa)) is the PH domain. Disordered stretches follow at residues 553–667 (SPKD…STAS) and 743–765 (MKSD…STST). Residues 560 to 584 (AASTPANPVYNRSSSQTSKGYNSSD) show a composition bias toward polar residues. Position 583 is a phosphoserine (serine 583). Over residues 599–616 (SPTSISSPSSKSSPFTKT) the composition is skewed to low complexity. A compositionally biased stretch (basic and acidic residues) spans 617-633 (TSKDTKSATTTDERPSD). Composition is skewed to low complexity over residues 645 to 667 (TSSL…STAS) and 748 to 765 (SLLP…STST). Residues 772–859 (TTNVKIRLRL…FELMDPVHNK (88 aa)) form the PB1 domain.

In terms of assembly, scd1, scd2, cdc42, and ras1, in its GTP-bound state, act cooperatively to form a protein complex. Interacts with moe1 and cdc42.

It localises to the nucleus. The protein resides in the cytoplasm. Functionally, required for mating and morphogenesis. May contain a cryptic binding site for cdc42 that is enhanced by binding Ras. Interacts directly with scd2. Promotes the exchange of cdc42-bound GDP by GTP. Involved in septation and stimulates the elongation of conjugation tubes. In Schizosaccharomyces pombe (strain 972 / ATCC 24843) (Fission yeast), this protein is Rho guanine nucleotide exchange factor scd1 (scd1).